The sequence spans 801 residues: Heavy metal tolerance factor 1 (801 aa).

At 1–24 (MGFSPFLDECRAEGLWPIGPSCNK) the chain is on the lumenal side. A helical transmembrane segment spans residues 25–45 (IISFGVYTFFIVVNFIVLCIP). Residues 46-75 (NSNSANNNYRRMTDDDASSTSKLTISKILS) are Cytoplasmic-facing. Residues 76–96 (ICTIFAVICQSIFYFCFTFYF) traverse the membrane as a helical segment. Residues 97–101 (HPYTH) lie on the Lumenal side of the membrane. A helical membrane pass occupies residues 102 to 122 (LLLAFCVSKLFFWILSLCSFS). Over 123–129 (KWRNQPS) the chain is Cytoplasmic. Residues 130 to 150 (TPISLAFAFSAALLIHCIPLT) form a helical membrane-spanning segment. Residues 151 to 167 (DWKKYFEPTSKNRGDLT) lie on the Lumenal side of the membrane. Residues 168–188 (FYIIELALVTVVFFFTIVTGL) traverse the membrane as a helical segment. The Cytoplasmic portion of the chain corresponds to 189 to 226 (FNFSGCSSRESAWNNLSKKVVTVAPYIWPTKSISLQLR). A helical transmembrane segment spans residues 227 to 247 (VVFCLFLLIIGRLINVSLPIL). Positions 227–516 (VVFCLFLLII…FGTIYRVIQK (290 aa)) constitute an ABC transmembrane type-1 domain. At 248-264 (SKWIVDELATPDTFQYS) the chain is on the lumenal side. A helical membrane pass occupies residues 265-285 (LLFLATFLKFLQGNGAMGGFL). Residues 286–341 (NTVRTYLWIPIQQYTTRELEVELFKHLHSLSLRWHLSRKTGQVLRVMDRGTSSVNN) are Cytoplasmic-facing. A helical transmembrane segment spans residues 342–364 (ILNYILFNVVPTIADIVIAVIFF). The Lumenal portion of the chain corresponds to 365–371 (FSAFNAY). A helical membrane pass occupies residues 372 to 390 (FGLIVFGTMALYLTVTISI). Topologically, residues 391–461 (TEWRTQYIRE…SLAFLNCLQN (71 aa)) are cytoplasmic. A helical transmembrane segment spans residues 462–482 (AIIGIGMIGGSVFVVYMIVHE). Residues 483 to 489 (KTLTVGD) lie on the Lumenal side of the membrane. A helical membrane pass occupies residues 490-510 (YVLFTTYLLQLYTPLNFFGTI). Residues 511 to 801 (YRVIQKAFVD…KSIELGEELP (291 aa)) lie on the Cytoplasmic side of the membrane. The ABC transporter domain occupies 550–784 (ISVKNLTFEY…QGTYASMWEA (235 aa)). Position 583 to 590 (583 to 590 (GSSGSGKS)) interacts with ATP.

The protein belongs to the ABC transporter superfamily. ABCB family. Heavy Metal importer (TC 3.A.1.210) subfamily. In terms of tissue distribution, expressed in coelomocytes, as well as in head and tail neurons, and in the intestinal cells.

The protein localises to the vacuole membrane. It localises to the early endosome. The protein resides in the late endosome. It is found in the recycling endosome. May play a pivotal role in the detoxification of heavy metals such as cadmium but do not depend exclusively on phytochelatins (PC) synthesis. The chain is Heavy metal tolerance factor 1 from Caenorhabditis elegans.